An 867-amino-acid polypeptide reads, in one-letter code: Alanine--tRNA ligase (867 aa).

Positions 556, 560, 658, and 662 each coordinate Zn(2+).

It belongs to the class-II aminoacyl-tRNA synthetase family. It depends on Zn(2+) as a cofactor.

The protein resides in the cytoplasm. The enzyme catalyses tRNA(Ala) + L-alanine + ATP = L-alanyl-tRNA(Ala) + AMP + diphosphate. Its function is as follows. Catalyzes the attachment of alanine to tRNA(Ala) in a two-step reaction: alanine is first activated by ATP to form Ala-AMP and then transferred to the acceptor end of tRNA(Ala). Also edits incorrectly charged Ser-tRNA(Ala) and Gly-tRNA(Ala) via its editing domain. In Fusobacterium nucleatum subsp. nucleatum (strain ATCC 25586 / DSM 15643 / BCRC 10681 / CIP 101130 / JCM 8532 / KCTC 2640 / LMG 13131 / VPI 4355), this protein is Alanine--tRNA ligase.